The chain runs to 387 residues: Alkanesulfonate monooxygenase (387 aa).

Belongs to the SsuD family.

The enzyme catalyses an alkanesulfonate + FMNH2 + O2 = an aldehyde + FMN + sulfite + H2O + 2 H(+). Its function is as follows. Catalyzes the desulfonation of aliphatic sulfonates. In Xanthomonas axonopodis pv. citri (strain 306), this protein is Alkanesulfonate monooxygenase.